The primary structure comprises 249 residues: Aspartate/glutamate leucyltransferase (249 aa).

The protein belongs to the R-transferase family. Bpt subfamily.

Its subcellular location is the cytoplasm. It catalyses the reaction N-terminal L-glutamyl-[protein] + L-leucyl-tRNA(Leu) = N-terminal L-leucyl-L-glutamyl-[protein] + tRNA(Leu) + H(+). The enzyme catalyses N-terminal L-aspartyl-[protein] + L-leucyl-tRNA(Leu) = N-terminal L-leucyl-L-aspartyl-[protein] + tRNA(Leu) + H(+). In terms of biological role, functions in the N-end rule pathway of protein degradation where it conjugates Leu from its aminoacyl-tRNA to the N-termini of proteins containing an N-terminal aspartate or glutamate. In Brucella abortus (strain S19), this protein is Aspartate/glutamate leucyltransferase.